Reading from the N-terminus, the 163-residue chain is MNAKDNETAEFETTADLAMIQRILPHRYPFLLVDKVIDMVRFKSALGIKNVTFNEPHFQGHFPGEPIMPGVMIVEALAQTSAVLVGHSMASADEDVSVYFMSIDNCKFRRKVVPGDVMSLRVETMRGKPGGKVWKFLGEAIVEDTVAAQAEFTAMISFPQAAA.

The active site involves H61.

This sequence belongs to the thioester dehydratase family. FabZ subfamily.

The protein resides in the cytoplasm. The enzyme catalyses a (3R)-hydroxyacyl-[ACP] = a (2E)-enoyl-[ACP] + H2O. Involved in unsaturated fatty acids biosynthesis. Catalyzes the dehydration of short chain beta-hydroxyacyl-ACPs and long chain saturated and unsaturated beta-hydroxyacyl-ACPs. The chain is 3-hydroxyacyl-[acyl-carrier-protein] dehydratase FabZ from Dinoroseobacter shibae (strain DSM 16493 / NCIMB 14021 / DFL 12).